A 196-amino-acid polypeptide reads, in one-letter code: Nucleoid occlusion factor SlmA (196 aa).

The region spanning 7–68 (TNRREEILQA…GLIEFIEEAL (62 aa)) is the HTH tetR-type domain. Residues 31 to 50 (TTAKLAKQVGVSEAALYRHF) constitute a DNA-binding region (H-T-H motif). The stretch at 110–142 (HALMFENERLRDRINQLFERIETQLRQILRERK) forms a coiled coil.

This sequence belongs to the nucleoid occlusion factor SlmA family. Homodimer. Interacts with FtsZ.

The protein resides in the cytoplasm. Its subcellular location is the nucleoid. Its function is as follows. Required for nucleoid occlusion (NO) phenomenon, which prevents Z-ring formation and cell division over the nucleoid. Acts as a DNA-associated cell division inhibitor that binds simultaneously chromosomal DNA and FtsZ, and disrupts the assembly of FtsZ polymers. SlmA-DNA-binding sequences (SBS) are dispersed on non-Ter regions of the chromosome, preventing FtsZ polymerization at these regions. The protein is Nucleoid occlusion factor SlmA of Vibrio campbellii (strain ATCC BAA-1116).